A 471-amino-acid chain; its full sequence is UDP-N-acetylmuramate--L-alanine ligase (471 aa).

Position 114–120 (114–120 (GTHGKTT)) interacts with ATP.

It belongs to the MurCDEF family.

The protein resides in the cytoplasm. The enzyme catalyses UDP-N-acetyl-alpha-D-muramate + L-alanine + ATP = UDP-N-acetyl-alpha-D-muramoyl-L-alanine + ADP + phosphate + H(+). Its pathway is cell wall biogenesis; peptidoglycan biosynthesis. Functionally, cell wall formation. The polypeptide is UDP-N-acetylmuramate--L-alanine ligase (Chlorobaculum parvum (strain DSM 263 / NCIMB 8327) (Chlorobium vibrioforme subsp. thiosulfatophilum)).